The primary structure comprises 598 residues: Membrane protein insertase YidC (598 aa).

The helical transmembrane segment at 7-27 (NYFIAIALSVLIVLGWQFLYM) threads the bilayer. A disordered region spans residues 37 to 76 (AQEAQKAQQQTEQVQQPAAGGQTPAQTSGAAPSGQAAATA). Over residues 40 to 76 (AQKAQQQTEQVQQPAAGGQTPAQTSGAAPSGQAAATA) the composition is skewed to low complexity. 4 helical membrane passes run 377 to 397 (FGVAILCTTIVVKALFFPLAS), 447 to 467 (WPVALQIPIFFSLYKVIYITI), 492 to 512 (LFGLLPFEGPTLLHLGVWPLI), and 538 to 558 (WMPLVFMFMLASFPAGLVIYW).

This sequence belongs to the OXA1/ALB3/YidC family. Type 1 subfamily. Interacts with the Sec translocase complex via SecD. Specifically interacts with transmembrane segments of nascent integral membrane proteins during membrane integration.

It localises to the cell inner membrane. Required for the insertion and/or proper folding and/or complex formation of integral membrane proteins into the membrane. Involved in integration of membrane proteins that insert both dependently and independently of the Sec translocase complex, as well as at least some lipoproteins. Aids folding of multispanning membrane proteins. In Rhizobium johnstonii (strain DSM 114642 / LMG 32736 / 3841) (Rhizobium leguminosarum bv. viciae), this protein is Membrane protein insertase YidC.